A 592-amino-acid chain; its full sequence is A-type ATP synthase subunit A (592 aa).

Residue 234–241 (GAFGTGKT) coordinates ATP.

This sequence belongs to the ATPase alpha/beta chains family. In terms of assembly, has multiple subunits with at least A(3), B(3), C, D, E, F, H, I and proteolipid K(x).

It localises to the cell membrane. It carries out the reaction ATP + H2O + 4 H(+)(in) = ADP + phosphate + 5 H(+)(out). Functionally, component of the A-type ATP synthase that produces ATP from ADP in the presence of a proton gradient across the membrane. The A chain is the catalytic subunit. This chain is A-type ATP synthase subunit A, found in Nitrosopumilus maritimus (strain SCM1).